A 100-amino-acid polypeptide reads, in one-letter code: Large ribosomal subunit protein uL23 (100 aa).

The protein belongs to the universal ribosomal protein uL23 family. Part of the 50S ribosomal subunit. Contacts protein L29, and trigger factor when it is bound to the ribosome.

In terms of biological role, one of the early assembly proteins it binds 23S rRNA. One of the proteins that surrounds the polypeptide exit tunnel on the outside of the ribosome. Forms the main docking site for trigger factor binding to the ribosome. This is Large ribosomal subunit protein uL23 from Buchnera aphidicola subsp. Baizongia pistaciae (strain Bp).